A 316-amino-acid polypeptide reads, in one-letter code: Transaldolase (316 aa).

Lys132 acts as the Schiff-base intermediate with substrate in catalysis.

It belongs to the transaldolase family. Type 1 subfamily.

The protein localises to the cytoplasm. It carries out the reaction D-sedoheptulose 7-phosphate + D-glyceraldehyde 3-phosphate = D-erythrose 4-phosphate + beta-D-fructose 6-phosphate. It functions in the pathway carbohydrate degradation; pentose phosphate pathway; D-glyceraldehyde 3-phosphate and beta-D-fructose 6-phosphate from D-ribose 5-phosphate and D-xylulose 5-phosphate (non-oxidative stage): step 2/3. In terms of biological role, transaldolase is important for the balance of metabolites in the pentose-phosphate pathway. The polypeptide is Transaldolase (Vibrio cholerae serotype O1 (strain ATCC 39315 / El Tor Inaba N16961)).